The primary structure comprises 242 residues: MTQIGPFDLEKKAAVVAVILEKPLETSKKAAEKGADILEVRLDLLGIRNPESAAKIIREIKSETGLPVLVTNRSVAEGGKWEGKEVDRTELLVALLSLKDGPDAVDIELSASREDRDKVIKAAKAHGKTVIISSHDFSKTPSPQEMTATLAEMFLAEADIAKIAVMPGSMEDVLNLLKVTLEFKNTGKTVCTIAMGKPGKHTRVVAPLYGSVLTYASIESNAVAAPGQLPVDEVKKIMEMLK.

Residues 39 to 41 (EVR) and Arg-73 contribute to the 3-dehydroquinate site. The active-site Proton donor/acceptor is the His-135. Lys-162 functions as the Schiff-base intermediate with substrate in the catalytic mechanism. Positions 203 and 228 each coordinate 3-dehydroquinate.

This sequence belongs to the type-I 3-dehydroquinase family. In terms of assembly, homodimer.

It carries out the reaction 3-dehydroquinate = 3-dehydroshikimate + H2O. It functions in the pathway metabolic intermediate biosynthesis; chorismate biosynthesis; chorismate from D-erythrose 4-phosphate and phosphoenolpyruvate: step 3/7. Functionally, involved in the third step of the chorismate pathway, which leads to the biosynthesis of aromatic amino acids. Catalyzes the cis-dehydration of 3-dehydroquinate (DHQ) and introduces the first double bond of the aromatic ring to yield 3-dehydroshikimate. This Methanosarcina acetivorans (strain ATCC 35395 / DSM 2834 / JCM 12185 / C2A) protein is 3-dehydroquinate dehydratase.